The primary structure comprises 783 residues: Zinc finger protein 107 (783 aa).

The C2H2-type 1; atypical zinc finger occupies 76 to 98 (FQCNKYVKVFDKFSNSNRYKRRH). 3 consecutive C2H2-type zinc fingers follow at residues 104–126 (FKCK…RRIH), 132–154 (YKCE…KRIH), and 160–182 (YKCE…KIIH). Lysine 186 is covalently cross-linked (Glycyl lysine isopeptide (Lys-Gly) (interchain with G-Cter in SUMO2)). The C2H2-type 5 zinc-finger motif lies at 188–210 (NKCEECGKAFKQASHLTIHKIIH). The C2H2-type 6; atypical zinc-finger motif lies at 216-238 (YKYEECGKVFSQSSHLTTQKILH). The segment at 244-266 (YKCKECGKAFNLFSNLTNHKRIH) adopts a C2H2-type 7 zinc-finger fold. A C2H2-type 8; atypical zinc finger spans residues 272 to 294 (YKCKECGRAFNISSNLNKQEKIH). The C2H2-type 9; atypical zinc-finger motif lies at 300 to 322 (NKCEECDKAFNRSLKLTAHKKIL). C2H2-type zinc fingers lie at residues 328-350 (YKCE…KIIH) and 356-378 (YKCK…KKIH). The C2H2-type 12; atypical zinc finger occupies 384–406 (YKCEECGKAFNQHSNLINHRKIY). C2H2-type zinc fingers lie at residues 412-434 (YKCE…KKIH), 440-462 (YKCE…KKIH), 468-490 (YKCE…KRIH), and 496-518 (YKCE…KIVH). Residues 524–546 (NKCEEFGKAFKQSSHRTIHKIIH) form a C2H2-type 17; atypical zinc finger. A C2H2-type 18; atypical zinc finger spans residues 552 to 574 (YKCEEHGKVFNQSSNLTTQKIIH). Residues 580 to 602 (YKFEEHGKAFNLFSNITNHKIIY) form a C2H2-type 19; atypical zinc finger. 5 consecutive C2H2-type zinc fingers follow at residues 608–630 (HKCE…KRIH), 636–658 (YQCA…KIIH), 664–686 (YKCK…KKIH), 692–714 (YKCE…KKIH), and 720–742 (YKCE…KIIH). The C2H2-type 25; atypical zinc finger occupies 748 to 770 (YKCGDYGRAFNLSSNLTTHKKIH).

The protein belongs to the krueppel C2H2-type zinc-finger protein family. In terms of tissue distribution, expressed in brain, heart, skeletal muscle, kidney and pancreas. Weakly expressed in aorta, liver and lung.

It is found in the nucleus. Functionally, may be involved in transcriptional regulation. This Homo sapiens (Human) protein is Zinc finger protein 107 (ZNF107).